We begin with the raw amino-acid sequence, 247 residues long: MHTQVLFEHPLNEKMRTWLRIEFLIQQLSINLPIADHAGALHFFRNISDLLDVFERGEVRTELLKELERQQRKLQAWVEVPGVDQDRIEALRQQLKSAGSVLISAPRIGQQLREDRLIALVRQRLSIPGGCCSFDLPTLHIWLHLQQAQRDAQIESWLASLNPLTQALTLVLDLIRNSAPFRKQTSLNGFYQDNGDDADLLRLMLTLDSQLYPQISGHKSRFAIRFMPLDSENGLVPERLDFELACC.

This sequence belongs to the ZapD family. As to quaternary structure, interacts with FtsZ.

It is found in the cytoplasm. Functionally, cell division factor that enhances FtsZ-ring assembly. Directly interacts with FtsZ and promotes bundling of FtsZ protofilaments, with a reduction in FtsZ GTPase activity. The sequence is that of Cell division protein ZapD from Salmonella dublin (strain CT_02021853).